A 288-amino-acid polypeptide reads, in one-letter code: Pantothenate synthetase (288 aa).

ATP is bound at residue 30–37 (MGFLHEGH). H37 functions as the Proton donor in the catalytic mechanism. (R)-pantoate is bound at residue Q61. Q61 serves as a coordination point for beta-alanine. An ATP-binding site is contributed by 147-150 (GMKD). Residue Q153 coordinates (R)-pantoate. 184-187 (KSSR) is an ATP binding site.

Belongs to the pantothenate synthetase family. In terms of assembly, homodimer.

The protein resides in the cytoplasm. The enzyme catalyses (R)-pantoate + beta-alanine + ATP = (R)-pantothenate + AMP + diphosphate + H(+). It functions in the pathway cofactor biosynthesis; (R)-pantothenate biosynthesis; (R)-pantothenate from (R)-pantoate and beta-alanine: step 1/1. Catalyzes the condensation of pantoate with beta-alanine in an ATP-dependent reaction via a pantoyl-adenylate intermediate. This chain is Pantothenate synthetase, found in Bacillus licheniformis (strain ATCC 14580 / DSM 13 / JCM 2505 / CCUG 7422 / NBRC 12200 / NCIMB 9375 / NCTC 10341 / NRRL NRS-1264 / Gibson 46).